The following is a 386-amino-acid chain: Histidine decarboxylase (386 aa).

Position 120 (histidine 120) interacts with substrate. Lysine 233 carries the N6-(pyridoxal phosphate)lysine modification.

Belongs to the group II decarboxylase family. Homotetramer. Pyridoxal 5'-phosphate serves as cofactor.

It carries out the reaction L-histidine + H(+) = histamine + CO2. This is Histidine decarboxylase from Vibrio campbellii (strain ATCC BAA-1116).